Here is a 155-residue protein sequence, read N- to C-terminus: Small ribosomal subunit protein uS7cz/uS7cy (155 aa).

It belongs to the universal ribosomal protein uS7 family. As to quaternary structure, part of the 30S ribosomal subunit.

The protein resides in the plastid. The protein localises to the chloroplast. One of the primary rRNA binding proteins, it binds directly to 16S rRNA where it nucleates assembly of the head domain of the 30S subunit. The protein is Small ribosomal subunit protein uS7cz/uS7cy (rps7-A) of Ceratophyllum demersum (Rigid hornwort).